Consider the following 137-residue polypeptide: Nucleoside diphosphate kinase (137 aa).

ATP-binding residues include K9, F57, R85, T91, R102, and N112. Residue H115 is the Pros-phosphohistidine intermediate of the active site.

It belongs to the NDK family. Homotetramer. It depends on Mg(2+) as a cofactor.

The protein localises to the cytoplasm. The enzyme catalyses a 2'-deoxyribonucleoside 5'-diphosphate + ATP = a 2'-deoxyribonucleoside 5'-triphosphate + ADP. It catalyses the reaction a ribonucleoside 5'-diphosphate + ATP = a ribonucleoside 5'-triphosphate + ADP. In terms of biological role, major role in the synthesis of nucleoside triphosphates other than ATP. The ATP gamma phosphate is transferred to the NDP beta phosphate via a ping-pong mechanism, using a phosphorylated active-site intermediate. The chain is Nucleoside diphosphate kinase from Nitratiruptor sp. (strain SB155-2).